A 580-amino-acid polypeptide reads, in one-letter code: Guanine nucleotide-binding protein alpha-4 subunit (580 aa).

Positions 1-10 (MSPSVSSPQL) are enriched in polar residues. Residues 1–28 (MSPSVSSPQLRHTKSNRAISRIDRTDPL) form a disordered region. The 487-residue stretch at 93 to 579 (RVYKMVLLGQ…RENLKLTGLV (487 aa)) folds into the G-alpha domain. A G1 motif region spans residues 96–109 (KMVLLGQAGAGKTT). 101–108 (GQAGAGKT) serves as a coordination point for GTP. Disordered stretches follow at residues 160–196 (KSSE…PNDA) and 302–325 (GRAA…KDNS). Residues 167–183 (LESSTSASTSTSASASS) show a composition bias toward low complexity. The tract at residues 387–395 (DILHSRVRT) is G2 motif. Residues 389–395 (LHSRVRT), 415–419 (DVGGS), 484–487 (NKID), and Ala-551 each bind GTP. Thr-395 contacts Mg(2+). Residues 411–420 (YRIYDVGGSR) are G3 motif. Positions 480–487 (ILFLNKID) are G4 motif. The interval 549-554 (TVATST) is G5 motif.

It belongs to the G-alpha family. As to quaternary structure, g proteins are composed of 3 units; alpha, beta and gamma. The alpha chain contains the guanine nucleotide binding site.

Its function is as follows. Guanine nucleotide-binding proteins (G proteins) are involved as modulators or transducers in various transmembrane signaling systems. In Mycosarcoma maydis (Corn smut fungus), this protein is Guanine nucleotide-binding protein alpha-4 subunit (GPA4).